A 572-amino-acid chain; its full sequence is Cuticlin-6 (572 aa).

The signal sequence occupies residues 1–24; the sequence is MRPIPYDISLSITSFLSLILICSA. Residues 25 to 541 lie on the Extracellular side of the membrane; the sequence is NPIDNGLVDS…PLPYPLINTN (517 aa). One can recognise a VWFA domain in the interval 47–216; sequence EVILLLDASG…QLDRALADSL (170 aa). N-linked (GlcNAc...) asparagine glycosylation is present at asparagine 78. One can recognise a ZP domain in the interval 233-479; that stretch reads ICGPDRIGVK…GGCEGITPPQ (247 aa). Residues 542-562 form a helical membrane-spanning segment; it reads LWIMGIITLTNIFVFILTVWF. Over 563-572 the chain is Cytoplasmic; that stretch reads TFRKRRCKPA.

The protein resides in the cell membrane. Its function is as follows. Plays a role in alae formation in dauer larvae probably by regulating cuticle assembly. This is Cuticlin-6 from Caenorhabditis elegans.